Consider the following 436-residue polypeptide: GTPase Der (436 aa).

EngA-type G domains are found at residues 4-167 (PIVA…DEET) and 176-351 (IRLS…ENHK). Residues 10 to 17 (GRPNVGKS), 57 to 61 (DTGGI), 119 to 122 (NKVD), 182 to 189 (GRPNVGKS), 229 to 233 (DTAGM), and 294 to 297 (NKWD) contribute to the GTP site. The KH-like domain occupies 352–436 (KRVQSSTLNE…PIHIIPRRRN (85 aa)).

This sequence belongs to the TRAFAC class TrmE-Era-EngA-EngB-Septin-like GTPase superfamily. EngA (Der) GTPase family. As to quaternary structure, associates with the 50S ribosomal subunit.

In terms of biological role, GTPase that plays an essential role in the late steps of ribosome biogenesis. This is GTPase Der from Staphylococcus haemolyticus (strain JCSC1435).